A 144-amino-acid polypeptide reads, in one-letter code: Probable low molecular weight protein-tyrosine-phosphatase AmsI (144 aa).

The active-site Nucleophile is Cys-9. The active site involves Arg-15. Asp-115 serves as the catalytic Proton donor.

Belongs to the low molecular weight phosphotyrosine protein phosphatase family.

The catalysed reaction is O-phospho-L-tyrosyl-[protein] + H2O = L-tyrosyl-[protein] + phosphate. Its function is as follows. May function as a phosphatase required for amylovoran (an exopolysaccharide that functions as a virulence factor) production. This chain is Probable low molecular weight protein-tyrosine-phosphatase AmsI (amsI), found in Erwinia amylovora (Fire blight bacteria).